A 220-amino-acid polypeptide reads, in one-letter code: Probable transaldolase (220 aa).

Lys-87 functions as the Schiff-base intermediate with substrate in the catalytic mechanism.

It belongs to the transaldolase family. Type 3B subfamily.

The protein resides in the cytoplasm. The enzyme catalyses D-sedoheptulose 7-phosphate + D-glyceraldehyde 3-phosphate = D-erythrose 4-phosphate + beta-D-fructose 6-phosphate. It participates in carbohydrate degradation; pentose phosphate pathway; D-glyceraldehyde 3-phosphate and beta-D-fructose 6-phosphate from D-ribose 5-phosphate and D-xylulose 5-phosphate (non-oxidative stage): step 2/3. Its function is as follows. Transaldolase is important for the balance of metabolites in the pentose-phosphate pathway. The sequence is that of Probable transaldolase from Porphyromonas gingivalis (strain ATCC 33277 / DSM 20709 / CIP 103683 / JCM 12257 / NCTC 11834 / 2561).